The primary structure comprises 289 residues: Elongation factor Ts (289 aa).

Residues 82 to 85 (TDFL) are involved in Mg(2+) ion dislocation from EF-Tu.

Belongs to the EF-Ts family.

It localises to the cytoplasm. Functionally, associates with the EF-Tu.GDP complex and induces the exchange of GDP to GTP. It remains bound to the aminoacyl-tRNA.EF-Tu.GTP complex up to the GTP hydrolysis stage on the ribosome. This Azotobacter vinelandii (strain DJ / ATCC BAA-1303) protein is Elongation factor Ts.